Consider the following 185-residue polypeptide: dTTP/UTP pyrophosphatase (185 aa).

The Proton acceptor role is filled by Asp-64.

This sequence belongs to the Maf family. YhdE subfamily. A divalent metal cation serves as cofactor.

The protein resides in the cytoplasm. The enzyme catalyses dTTP + H2O = dTMP + diphosphate + H(+). It catalyses the reaction UTP + H2O = UMP + diphosphate + H(+). Its function is as follows. Nucleoside triphosphate pyrophosphatase that hydrolyzes dTTP and UTP. May have a dual role in cell division arrest and in preventing the incorporation of modified nucleotides into cellular nucleic acids. The protein is dTTP/UTP pyrophosphatase of Leptospira borgpetersenii serovar Hardjo-bovis (strain JB197).